Here is a 329-residue protein sequence, read N- to C-terminus: Beta-ketoacyl-[acyl-carrier-protein] synthase III (329 aa).

Catalysis depends on residues C123 and H256. The tract at residues 257–261 (QANIR) is ACP-binding. N286 is an active-site residue.

It belongs to the thiolase-like superfamily. FabH family. As to quaternary structure, homodimer.

It localises to the cytoplasm. It catalyses the reaction malonyl-[ACP] + acetyl-CoA + H(+) = 3-oxobutanoyl-[ACP] + CO2 + CoA. The protein operates within lipid metabolism; fatty acid biosynthesis. In terms of biological role, catalyzes the condensation reaction of fatty acid synthesis by the addition to an acyl acceptor of two carbons from malonyl-ACP. Catalyzes the first condensation reaction which initiates fatty acid synthesis and may therefore play a role in governing the total rate of fatty acid production. Possesses both acetoacetyl-ACP synthase and acetyl transacylase activities. Its substrate specificity determines the biosynthesis of branched-chain and/or straight-chain of fatty acids. This Burkholderia thailandensis (strain ATCC 700388 / DSM 13276 / CCUG 48851 / CIP 106301 / E264) protein is Beta-ketoacyl-[acyl-carrier-protein] synthase III.